The following is a 398-amino-acid chain: DNA replication and repair protein RecF (398 aa).

Gly-30–Thr-37 serves as a coordination point for ATP.

This sequence belongs to the RecF family.

Its subcellular location is the cytoplasm. In terms of biological role, the RecF protein is involved in DNA metabolism; it is required for DNA replication and normal SOS inducibility. RecF binds preferentially to single-stranded, linear DNA. It also seems to bind ATP. The polypeptide is DNA replication and repair protein RecF (Renibacterium salmoninarum (strain ATCC 33209 / DSM 20767 / JCM 11484 / NBRC 15589 / NCIMB 2235)).